Reading from the N-terminus, the 203-residue chain is High frequency lysogenization protein HflD homolog (203 aa).

The protein belongs to the HflD family.

The protein resides in the cytoplasm. Its subcellular location is the cell inner membrane. The polypeptide is High frequency lysogenization protein HflD homolog (Pasteurella multocida (strain Pm70)).